A 219-amino-acid chain; its full sequence is Protoglabretal synthase ISM2 (219 aa).

5 helical membrane passes run 26 to 46, 59 to 79, 112 to 132, 144 to 164, and 178 to 198; these read VHAWNGAATFLVMYGIWVLAG, LMIWWAVSGLIHIIHEGYWLF, AVVGIEGIAVIIVGPASLFAV, ILQLALALVQFYGSTLYFITA, and YYKYFIAQGGTWLLFPALIII. Residues 55-197 form the EXPERA domain; that stretch reads TDKWLMIWWA…TWLLFPALII (143 aa).

The protein belongs to the EBP family.

It is found in the membrane. The enzyme catalyses 7,8-epoxymelianol = protoglabretal. Its pathway is secondary metabolite biosynthesis; terpenoid biosynthesis. In terms of biological role, isomerase involved in the biosynthesis of glabretanes triterpene natural products such as glabretal, a component with in vitro antiproliferative properties on lymphocytes. Catalyzes the conversion of 7,8-epoxymelianol to protoglabretal via skeletal rearrangements. The protein is Protoglabretal synthase ISM2 of Ailanthus altissima (Tree-of-heaven).